The sequence spans 326 residues: Vascular endothelial growth factor D (326 aa).

Positions 1–21 (MYGEWAAVNILMMSYVYLVQG) are cleaved as a signal peptide. Residues 22–93 (FSIEHRAVKD…SRSTSHRSTR (72 aa)) constitute a propeptide that is removed on maturation. 3 cysteine pairs are disulfide-bonded: Cys116/Cys158, Cys147/Cys194, and Cys151/Cys196. Asn160 and Asn190 each carry an N-linked (GlcNAc...) asparagine glycan. A propeptide spanning residues 211 to 326 (SIQIPEEDQC…CRSMVFSLSP (116 aa)) is cleaved from the precursor. A 1; approximate repeat occupies 227-242 (CPVDMLWDNTKCKCVL). The tract at residues 227–317 (CPVDMLWDNT…KHKMFHPDTC (91 aa)) is 4 X 16 AA repeats of C-X(10)-C-X-C-X(1,3)-C. 2 tandem repeats follow at residues 263–278 (CGPH…ECVC) and 282–298 (CPGD…CFEC). Asn292 is a glycosylation site (N-linked (GlcNAc...) asparagine). The 4; truncated repeat unit spans residues 306–317 (CQKHKMFHPDTC).

Belongs to the PDGF/VEGF growth factor family. Homodimer; non-covalent and antiparallel. Undergoes a complex proteolytic maturation which generates a variety of processed secreted forms with increased activity toward VEGFR-3 and VEGFR-2. VEGF-D first form an antiparallel homodimer linked by disulfide bonds before secretion. The fully processed VEGF-D is composed mostly of two VEGF homology domains (VHDs) bound by non-covalent interactions. As to expression, highly expressed in the spleen, kidney, lung, tongue, ovary and mammary gland.

It localises to the secreted. Growth factor active in angiogenesis, lymphangiogenesis and endothelial cell growth, stimulating their proliferation and migration and also has effects on the permeability of blood vessels. May function in the formation of the venous and lymphatic vascular systems during embryogenesis, and also in the maintenance of differentiated lymphatic endothelium in adults. Binds and activates VEGFR-3 (Flt4) receptor. The polypeptide is Vascular endothelial growth factor D (Rattus norvegicus (Rat)).